A 212-amino-acid polypeptide reads, in one-letter code: Large ribosomal subunit protein uL3 (212 aa).

The interval arginine 131–arginine 155 is disordered.

This sequence belongs to the universal ribosomal protein uL3 family. In terms of assembly, part of the 50S ribosomal subunit. Forms a cluster with proteins L14 and L19.

Its function is as follows. One of the primary rRNA binding proteins, it binds directly near the 3'-end of the 23S rRNA, where it nucleates assembly of the 50S subunit. In Microcystis aeruginosa (strain NIES-843 / IAM M-2473), this protein is Large ribosomal subunit protein uL3.